We begin with the raw amino-acid sequence, 230 residues long: Uracil-DNA glycosylase (230 aa).

The active-site Proton acceptor is the D70.

This sequence belongs to the uracil-DNA glycosylase (UDG) superfamily. UNG family.

It is found in the cytoplasm. The catalysed reaction is Hydrolyzes single-stranded DNA or mismatched double-stranded DNA and polynucleotides, releasing free uracil.. In terms of biological role, excises uracil residues from the DNA which can arise as a result of misincorporation of dUMP residues by DNA polymerase or due to deamination of cytosine. The chain is Uracil-DNA glycosylase from Pseudomonas fluorescens (strain SBW25).